We begin with the raw amino-acid sequence, 453 residues long: GTPase Der (453 aa).

2 consecutive EngA-type G domains span residues 4–169 and 177–352; these read PIVA…PPTT and IKIA…EEHK. GTP is bound by residues 10-17, 57-61, 120-123, 183-190, 230-234, and 295-298; these read GRPNVGKS, DTGGL, NKCE, DTAGI, and NKWD. One can recognise a KH-like domain in the interval 353–438; it reads RRVSTSVINE…PIRLLWRSKK (86 aa).

This sequence belongs to the TRAFAC class TrmE-Era-EngA-EngB-Septin-like GTPase superfamily. EngA (Der) GTPase family. As to quaternary structure, associates with the 50S ribosomal subunit.

GTPase that plays an essential role in the late steps of ribosome biogenesis. The protein is GTPase Der of Trichormus variabilis (strain ATCC 29413 / PCC 7937) (Anabaena variabilis).